The following is a 668-amino-acid chain: DNA ligase (668 aa).

NAD(+) contacts are provided by residues 31 to 35 (DYDFD), 80 to 81 (SL), and glutamate 111. Catalysis depends on lysine 113, which acts as the N6-AMP-lysine intermediate. Arginine 134, glutamate 170, lysine 285, and lysine 309 together coordinate NAD(+). Zn(2+) is bound by residues cysteine 403, cysteine 406, cysteine 421, and cysteine 427. The region spanning 587-668 (NATEKFIGKT…EFITKLNESE (82 aa)) is the BRCT domain.

This sequence belongs to the NAD-dependent DNA ligase family. LigA subfamily. Mg(2+) is required as a cofactor. The cofactor is Mn(2+).

The catalysed reaction is NAD(+) + (deoxyribonucleotide)n-3'-hydroxyl + 5'-phospho-(deoxyribonucleotide)m = (deoxyribonucleotide)n+m + AMP + beta-nicotinamide D-nucleotide.. In terms of biological role, DNA ligase that catalyzes the formation of phosphodiester linkages between 5'-phosphoryl and 3'-hydroxyl groups in double-stranded DNA using NAD as a coenzyme and as the energy source for the reaction. It is essential for DNA replication and repair of damaged DNA. The chain is DNA ligase from Flavobacterium johnsoniae (strain ATCC 17061 / DSM 2064 / JCM 8514 / BCRC 14874 / CCUG 350202 / NBRC 14942 / NCIMB 11054 / UW101) (Cytophaga johnsonae).